A 286-amino-acid chain; its full sequence is Bifunctional protein FolD (286 aa).

Residues Gly166 to Ser168 and Ile232 each bind NADP(+).

This sequence belongs to the tetrahydrofolate dehydrogenase/cyclohydrolase family. Homodimer.

The enzyme catalyses (6R)-5,10-methylene-5,6,7,8-tetrahydrofolate + NADP(+) = (6R)-5,10-methenyltetrahydrofolate + NADPH. It catalyses the reaction (6R)-5,10-methenyltetrahydrofolate + H2O = (6R)-10-formyltetrahydrofolate + H(+). It participates in one-carbon metabolism; tetrahydrofolate interconversion. Its function is as follows. Catalyzes the oxidation of 5,10-methylenetetrahydrofolate to 5,10-methenyltetrahydrofolate and then the hydrolysis of 5,10-methenyltetrahydrofolate to 10-formyltetrahydrofolate. The chain is Bifunctional protein FolD from Shewanella piezotolerans (strain WP3 / JCM 13877).